We begin with the raw amino-acid sequence, 1197 residues long: DExH-box ATP-dependent RNA helicase DExH3 (1197 aa).

A Helicase ATP-binding domain is found at 309-476 (LKAIAANQVV…FGGAPAMHIP (168 aa)). 322–329 (GETGCGKT) lines the ATP pocket. Positions 423–426 (DEIH) match the DEIH box motif. Positions 564-738 (LIENVLCHIV…SLCLQIKSLG (175 aa)) constitute a Helicase C-terminal domain.

This sequence belongs to the DExH box helicase family.

The enzyme catalyses ATP + H2O = ADP + phosphate + H(+). The protein is DExH-box ATP-dependent RNA helicase DExH3 of Arabidopsis thaliana (Mouse-ear cress).